The chain runs to 419 residues: Putative polyketide beta-ketoacyl synthase 2 (419 aa).

In terms of domain architecture, Ketosynthase family 3 (KS3) spans 10-413 (TRRTAVTGIG…GSNAALVLRP (404 aa)).

It belongs to the thiolase-like superfamily. Beta-ketoacyl-ACP synthases family.

It participates in antibiotic biosynthesis; curamycin biosynthesis. This is Putative polyketide beta-ketoacyl synthase 2 (curB) from Streptomyces cyaneus (Streptomyces curacoi).